A 626-amino-acid polypeptide reads, in one-letter code: Methanol dehydrogenase [cytochrome c] subunit 1 (626 aa).

The signal sequence occupies residues 1-27; sequence MSRFVTSVSALAMLALAPAALSSVAYA. C130 and C131 are joined by a disulfide. Positions 204 and 288 each coordinate Ca(2+). Residue D330 is the Proton acceptor of the active site. C413 and C442 are joined by a disulfide.

This sequence belongs to the bacterial PQQ dehydrogenase family. Heterotetramer composed of 2 alpha and 2 beta subunits. Requires pyrroloquinoline quinone as cofactor. The cofactor is Ca(2+).

It localises to the cell inner membrane. It catalyses the reaction 2 Fe(III)-[cytochrome cL] + a primary alcohol = 2 Fe(II)-[cytochrome cL] + an aldehyde + 2 H(+). In terms of biological role, catalyzes the oxidation of primary alcohols including methanol. The polypeptide is Methanol dehydrogenase [cytochrome c] subunit 1 (moxF) (Methylobacterium organophilum).